A 397-amino-acid chain; its full sequence is Putative nickel insertion protein (397 aa).

This sequence belongs to the LarC family.

This chain is Putative nickel insertion protein, found in Synechococcus sp. (strain JA-3-3Ab) (Cyanobacteria bacterium Yellowstone A-Prime).